The sequence spans 504 residues: Calcium/calmodulin-dependent protein kinase type II (504 aa).

Residues 65–351 enclose the Protein kinase domain; it reads YQLIENLGDG…IHQFFQHPWI (287 aa). Residues 71-79 and Lys94 each bind ATP; that span reads LGDGAFSQV. Asp188 acts as the Proton acceptor in catalysis. Thr252 is subject to Phosphothreonine.

Belongs to the protein kinase superfamily. CAMK Ser/Thr protein kinase family. CaMK subfamily. Interacts with sty1. Requires Mg(2+) as cofactor. In terms of processing, autophosphorylated.

It is found in the cytoplasm. It localises to the barrier septum. Its subcellular location is the forespore membrane. The protein localises to the ascus epiplasm. It carries out the reaction L-seryl-[protein] + ATP = O-phospho-L-seryl-[protein] + ADP + H(+). It catalyses the reaction L-threonyl-[protein] + ATP = O-phospho-L-threonyl-[protein] + ADP + H(+). In terms of biological role, has a role in the regulation of G2/M transition during the mitotic cell cycle. The protein is Calcium/calmodulin-dependent protein kinase type II of Schizosaccharomyces pombe (strain 972 / ATCC 24843) (Fission yeast).